A 497-amino-acid chain; its full sequence is Guanosine-5'-triphosphate,3'-diphosphate pyrophosphatase (497 aa).

It belongs to the GppA/Ppx family. GppA subfamily.

It carries out the reaction guanosine 3'-diphosphate 5'-triphosphate + H2O = guanosine 3',5'-bis(diphosphate) + phosphate + H(+). It functions in the pathway purine metabolism; ppGpp biosynthesis; ppGpp from GTP: step 2/2. Functionally, catalyzes the conversion of pppGpp to ppGpp. Guanosine pentaphosphate (pppGpp) is a cytoplasmic signaling molecule which together with ppGpp controls the 'stringent response', an adaptive process that allows bacteria to respond to amino acid starvation, resulting in the coordinated regulation of numerous cellular activities. In Photobacterium profundum (strain SS9), this protein is Guanosine-5'-triphosphate,3'-diphosphate pyrophosphatase.